Consider the following 559-residue polypeptide: 2-isopropylmalate synthase (559 aa).

The 275-residue stretch at 33–307 (PIWCSSDLRD…NPELDFSDID (275 aa)) folds into the Pyruvate carboxyltransferase domain. Mg(2+) contacts are provided by Asp-42, His-246, His-248, and Asn-282. Positions 439–559 (ANTPYALVSH…SLSEQQAKAA (121 aa)) are regulatory domain.

This sequence belongs to the alpha-IPM synthase/homocitrate synthase family. LeuA type 2 subfamily. As to quaternary structure, homodimer. Requires Mg(2+) as cofactor.

Its subcellular location is the cytoplasm. The catalysed reaction is 3-methyl-2-oxobutanoate + acetyl-CoA + H2O = (2S)-2-isopropylmalate + CoA + H(+). The protein operates within amino-acid biosynthesis; L-leucine biosynthesis; L-leucine from 3-methyl-2-oxobutanoate: step 1/4. Functionally, catalyzes the condensation of the acetyl group of acetyl-CoA with 3-methyl-2-oxobutanoate (2-ketoisovalerate) to form 3-carboxy-3-hydroxy-4-methylpentanoate (2-isopropylmalate). In Pseudomonas fluorescens (strain ATCC BAA-477 / NRRL B-23932 / Pf-5), this protein is 2-isopropylmalate synthase.